Reading from the N-terminus, the 489-residue chain is MHLKKGKRSIGTVWRLLWKRLYSVHYKTNTYSTRSRKKLVTNFTRVNGLLLSCNGDTFPYMRTLWRYFNAPGNLMFVTTNIITFTGIVAYNTMVTVSNERVFEEQMIAAQMSLAKQKEELETRALDFPANHEQIKEADDANCEQPAIERSGEDRSVKQQNEQLDSPIRHYSLTDLVLNKEARVADYDSQRVKASLFHMLYAYMLYRDTIQPNSDSPNHNSEEWRHEVELLTRDKWLQGAHQRIDVFYDLWNNQLDKIVTSPEKVQNFHLPNWSKYPTLLKFICTELHNNELTTLDEFKQFYGKVRSNEVKKLLGLWLYDHSFLFPRNIYDNKNQEVFYDTLISDSMQDNKIFQKYSSIVMNPDNERTQLFFPNIYAQPVNKPIPSISLETYTRLLRGYITLQETNCKYDYNDNIFKLISILKMNCFLQHDKKIRTGASVRILLPRDEDRSPVLNTIPQAEKKTCYQILSKNRDILALLKRISDIQIDSS.

The protein localises to the mitochondrion inner membrane. Functionally, required for the expression of the mitochondrial gene for cytochrome c oxidase subunit III (COX3). This is COX3 mRNA-specific translational activator PET494 (PET494) from Saccharomyces bayanus (Yeast).